The following is a 371-amino-acid chain: Deoxyuridine 5'-triphosphate nucleotidohydrolase (371 aa).

Substrate contacts are provided by residues 260–262 (RSS) and 366–367 (FG). The segment at 350 to 371 (NEFDAEAPPSERGTGGFGSTGI) is disordered. The span at 362–371 (GTGGFGSTGI) shows a compositional bias: gly residues.

Belongs to the dUTPase family. Mg(2+) is required as a cofactor.

It catalyses the reaction dUTP + H2O = dUMP + diphosphate + H(+). In terms of biological role, involved in nucleotide metabolism: produces dUMP, the immediate precursor of thymidine nucleotides and decreases the intracellular concentration of dUTP to avoid uracil incorporation into viral DNA. The chain is Deoxyuridine 5'-triphosphate nucleotidohydrolase from Homo sapiens (Human).